A 314-amino-acid chain; its full sequence is MSSVIFLGTPNFGSVVLQGLIEQGYEIKAVVTQPDKRVGRKQVVHQSAVKETALKHNLPVYQPAKLSGSEELAELMKIEPDFIITAAYGQFLPTKFLKSAKVAPVNVHGSLLPKYRGGAPIQYSVLNGDKETGVTIMEMVKKMDAGDIFAQKALPITDEDTSGTLFDKLSILGRDLLLETLPKFIDGTVTRTAQDEDKVVFSPNISKDQEKINLSMTAKEANNLIRALNPDPGAYFMLGGKRFKVWKAKPLTEKTSFPAGTLVTNKKKFVISMADGSQLELLEVQPTGKKKMNIKDYLNGQGSHFTIGDKIIDE.

110–113 contributes to the (6S)-5,6,7,8-tetrahydrofolate binding site; sequence SLLP.

Belongs to the Fmt family.

It catalyses the reaction L-methionyl-tRNA(fMet) + (6R)-10-formyltetrahydrofolate = N-formyl-L-methionyl-tRNA(fMet) + (6S)-5,6,7,8-tetrahydrofolate + H(+). Functionally, attaches a formyl group to the free amino group of methionyl-tRNA(fMet). The formyl group appears to play a dual role in the initiator identity of N-formylmethionyl-tRNA by promoting its recognition by IF2 and preventing the misappropriation of this tRNA by the elongation apparatus. This chain is Methionyl-tRNA formyltransferase, found in Lactobacillus johnsonii (strain CNCM I-12250 / La1 / NCC 533).